The sequence spans 1385 residues: MALFRKFFFKKPPDGLLLITDNIYVFDHCFSMKEMEEDHFEAHIRGVAAHLLDNFGDHSFMISNFGIRDEESPIYHILSEYGMTVLDYPGHYEGCPLLTMEMVHCILKSSESWLSLGQRNFLIMHCEQGCWPILAFMLAALLIYLGQYSDEQKTLDMLYKQSPVELLEMFSPLNPMPSQLRYLRYVSMRNVVPEWPPADRALTLDSVILRMVPDFHGQGGFRPIFRIYGPDPLMPTDQTPKVLFSTPKRSNVVRFYSQADELVKINLQCHVQGDVVLECINLYEDLDREDMVIFSDMDATTSHITTEPVSHQEKQGLGIEEFAKVLDIFNHLDWLDGKKDTSLHIPQRKASSTSQGNIDESPADGSETFFDTKEELDFDSLSGESSSSLVLKLTDDYVMVGCTELQQDPLHSTSAEVPSKIQTIEVAPSRTRPPSVLLSPTKVKMPKTSASSMALPSSTVIPQAPSSPVQPQGLIDSAVQIAPAQSASKSAENSGSQTPVNQEPSPLTVNNSASTASLIALCTPPPLPPPPPTVSLAPVSPILPINTSTSIISVSLRSIMPSPSQPPESSASPLALARNEELVKSQEPSCENLEKFPPEFSRASSVTALSSDSLLSIEKESSSTRTYVPEALPAMPLTSDTRTSLISISTAASPPLPPPLPPPLKPSTVMFPLSYGKEVASTKEKAAPTQPPLPPPPPPIQPTLISNSIYSSTSSVVSAPLKRGQSPAPPPPPPPPPPPPFPVSSFSPPQPPPQPPSAVPGLQASPVPPPPPPPPPPMIPGMKTPPTPPPPPPAAPGQQAPAVPPPPPPPPPPMVPGMQTRPIPPPPPPSQTNSLVSSFPSTSKRIPPPPPPPSQTSSLVSSLPSSRKGNDVAAPRPPPPPPLYSRSSHVTSAPSAPPAPPLPPPKLVGASKPSQEQMITWPPPPPPGPPPKNSSNSLPSKGNVVSSSPPPPPTFSFGAKDRSTARSRSPRSLRPNQSSKRTPLKPLHWVKVSRATQGSLWAETQKSDEASRTPEIDISELESLFSVAMPNMEEKRARQRPSVAAKQEKVLLIDLQRSKNCEIMLRNIKMPLPDLMNSVLALDDSIVDGDQVDYLIKFCPTKEEMELLKGFTGNKENLGKCEQFFLEMMKVPRVESKLRILSFKIKFLTQVADLKNSLNTINSVAEEVRNSVKLKRVMQTILSLGNALNQGTARGSAVGFRLDSLLKLIDIRARNNRMTLMHYLCKVLSDKLPEVLDFNKDLTYLEPASKIQLKELAEEMQAITKGLEKVEQELTTSEKDGPGSEIFYKKLKEFLADAQAEGRSLAFLYSTAGKSADSLAHYFGEDPVRCPFEQVVSTLLSFVKTFERAHAENLRQMELEKKRAQMEAEKEKVKAAAHKEDLLEP.

A Phosphatase tensin-type domain is found at 9–193; sequence FKKPPDGLLL…RYVSMRNVVP (185 aa). The active-site Phosphocysteine intermediate is C126. In terms of domain architecture, C2 tensin-type spans 199–358; sequence DRALTLDSVI…KASSTSQGNI (160 aa). Disordered regions lie at residues 345–367, 427–510, 649–989, and 1362–1385; these read IPQRKASSTSQGNIDESPADGSE, APSR…LTVN, STAA…PLHW, and KRAQMEAEKEKVKAAAHKEDLLEP. Polar residues-rich tracts occupy residues 349 to 358, 448 to 470, and 483 to 510; these read KASSTSQGNI, TSASSMALPSSTVIPQAPSSPVQ, and PAQSASKSAENSGSQTPVNQEPSPLTVN. 2 stretches are compositionally biased toward pro residues: residues 654-665 and 689-701; these read PPLPPPLPPPLK and TQPPLPPPPPPIQ. Low complexity predominate over residues 702 to 718; that stretch reads PTLISNSIYSSTSSVVS. Composition is skewed to pro residues over residues 727–758, 766–795, and 802–815; these read PAPPPPPPPPPPPPFPVSSFSPPQPPPQPPSA, PVPPPPPPPPPPMIPGMKTPPTPPPPPPAA, and AVPPPPPPPPPPMV. A compositionally biased stretch (low complexity) spans 855-867; it reads QTSSLVSSLPSSR. Composition is skewed to pro residues over residues 895–906 and 921–932; these read SAPPAPPLPPPK and WPPPPPPGPPPK. The span at 933–942 shows a compositional bias: low complexity; sequence NSSNSLPSKG. One can recognise an FH2 domain in the interval 974-1372; sequence RPNQSSKRTP…RAQMEAEKEK (399 aa).

This sequence belongs to the formin-like family. Class-II subfamily.

The chain is Formin-like protein 7 (FH7) from Oryza sativa subsp. japonica (Rice).